We begin with the raw amino-acid sequence, 222 residues long: Glutathione S-transferase A6 (222 aa).

The GST N-terminal domain occupies 3 to 83 (EKPLFHYDEA…YFSSKYNLYG (81 aa)). Glutathione contacts are provided by residues Y9, R45, 54–55 (QV), and 67–68 (QT). One can recognise a GST C-terminal domain in the interval 85–208 (DMKERALIDM…QPGSQRQPPV (124 aa)).

The protein belongs to the GST superfamily. Alpha family. Homodimer or heterodimer of GSTA1 and GSTA2.

The protein resides in the cytoplasm. The catalysed reaction is RX + glutathione = an S-substituted glutathione + a halide anion + H(+). In terms of biological role, conjugation of reduced glutathione to a wide number of exogenous and endogenous hydrophobic electrophiles. This Rattus norvegicus (Rat) protein is Glutathione S-transferase A6 (Gsta6).